The sequence spans 236 residues: Small ribosomal subunit protein mS41 (236 aa).

It belongs to the mitochondrion-specific ribosomal protein mS41 family. In terms of assembly, component of the mitochondrial small ribosomal subunit (mt-SSU). Mature N.crassa 74S mitochondrial ribosomes consist of a small (37S) and a large (54S) subunit. The 37S small subunit contains a 16S ribosomal RNA (16S mt-rRNA) and 32 different proteins. The 54S large subunit contains a 23S rRNA (23S mt-rRNA) and 42 different proteins.

Its subcellular location is the mitochondrion. Component of the mitochondrial ribosome (mitoribosome), a dedicated translation machinery responsible for the synthesis of mitochondrial genome-encoded proteins, including at least some of the essential transmembrane subunits of the mitochondrial respiratory chain. The mitoribosomes are attached to the mitochondrial inner membrane and translation products are cotranslationally integrated into the membrane. This Neurospora crassa (strain ATCC 24698 / 74-OR23-1A / CBS 708.71 / DSM 1257 / FGSC 987) protein is Small ribosomal subunit protein mS41 (fyv4).